The following is a 164-amino-acid chain: S-ribosylhomocysteine lyase (164 aa).

Fe cation-binding residues include His61, His65, and Cys131.

Belongs to the LuxS family. In terms of assembly, homodimer. Fe cation is required as a cofactor.

The enzyme catalyses S-(5-deoxy-D-ribos-5-yl)-L-homocysteine = (S)-4,5-dihydroxypentane-2,3-dione + L-homocysteine. Its function is as follows. Involved in the synthesis of autoinducer 2 (AI-2) which is secreted by bacteria and is used to communicate both the cell density and the metabolic potential of the environment. The regulation of gene expression in response to changes in cell density is called quorum sensing. Catalyzes the transformation of S-ribosylhomocysteine (RHC) to homocysteine (HC) and 4,5-dihydroxy-2,3-pentadione (DPD). This is S-ribosylhomocysteine lyase from Bifidobacterium longum (strain DJO10A).